Reading from the N-terminus, the 311-residue chain is tRNA pseudouridine synthase B (311 aa).

Asp-39 (nucleophile) is an active-site residue. Residues 237–268 (RELSEQETTEISFGRRIAAGPGAGTPDAATAE) are disordered. A compositionally biased stretch (low complexity) spans 254 to 268 (AAGPGAGTPDAATAE).

Belongs to the pseudouridine synthase TruB family. Type 1 subfamily.

The catalysed reaction is uridine(55) in tRNA = pseudouridine(55) in tRNA. Its function is as follows. Responsible for synthesis of pseudouridine from uracil-55 in the psi GC loop of transfer RNAs. In Paenarthrobacter aurescens (strain TC1), this protein is tRNA pseudouridine synthase B.